The following is a 264-amino-acid chain: Tryptophan synthase alpha chain (264 aa).

Catalysis depends on proton acceptor residues glutamate 49 and aspartate 60.

This sequence belongs to the TrpA family. As to quaternary structure, tetramer of two alpha and two beta chains.

The enzyme catalyses (1S,2R)-1-C-(indol-3-yl)glycerol 3-phosphate + L-serine = D-glyceraldehyde 3-phosphate + L-tryptophan + H2O. The protein operates within amino-acid biosynthesis; L-tryptophan biosynthesis; L-tryptophan from chorismate: step 5/5. In terms of biological role, the alpha subunit is responsible for the aldol cleavage of indoleglycerol phosphate to indole and glyceraldehyde 3-phosphate. This chain is Tryptophan synthase alpha chain, found in Laribacter hongkongensis (strain HLHK9).